The primary structure comprises 392 residues: MDQDMGMATGYFQDADMQMDEPAAATQSIYPHSATLFAAISACVFVTIGVLGNLITLLALLKSPTIREHATTAFVISLSISDLLFCSFSLPLTAVRFFQESWTFGTTLCKIFPVIFYGNVAVSLLSMVGITLNRYILIACHSRYSQIYKPKFITLQLLFVWAVSFLLLLPPILGIWGEMGLDEATFSCTILKKEGRSIKKTLFVIGFLLPCLVIIVSYSCIYITVLHQKKKIRNHDNFQIAAAKGSSSSGGGSYMTTTCTRKAREDNRLTVMMVTIFLCFLVCFLPLMLANVVDDERNTSYPWLHIIASVMAWASSVINPIIYAASNRNYRVAYYKIFALLKFWGEPLSPMPSRNYHQSKNSKELSGVIRSTPLFHAVQKNSINQMCQTYSV.

The Extracellular segment spans residues 1–39; the sequence is MDQDMGMATGYFQDADMQMDEPAAATQSIYPHSATLFAA. A helical transmembrane segment spans residues 40-60; that stretch reads ISACVFVTIGVLGNLITLLAL. At 61-73 the chain is on the cytoplasmic side; that stretch reads LKSPTIREHATTA. A helical transmembrane segment spans residues 74–94; it reads FVISLSISDLLFCSFSLPLTA. Over 95-110 the chain is Extracellular; the sequence is VRFFQESWTFGTTLCK. The chain crosses the membrane as a helical span at residues 111–131; the sequence is IFPVIFYGNVAVSLLSMVGIT. Over 132–156 the chain is Cytoplasmic; it reads LNRYILIACHSRYSQIYKPKFITLQ. The helical transmembrane segment at 157-177 threads the bilayer; sequence LLFVWAVSFLLLLPPILGIWG. Topologically, residues 178-202 are extracellular; that stretch reads EMGLDEATFSCTILKKEGRSIKKTL. A helical membrane pass occupies residues 203 to 223; the sequence is FVIGFLLPCLVIIVSYSCIYI. The Cytoplasmic segment spans residues 224–268; that stretch reads TVLHQKKKIRNHDNFQIAAAKGSSSSGGGSYMTTTCTRKAREDNR. A helical membrane pass occupies residues 269–289; the sequence is LTVMMVTIFLCFLVCFLPLML. Residues 290-302 are Extracellular-facing; it reads ANVVDDERNTSYP. The N-linked (GlcNAc...) asparagine glycan is linked to Asn-298. A helical membrane pass occupies residues 303-323; sequence WLHIIASVMAWASSVINPIIY. The Cytoplasmic segment spans residues 324–392; that stretch reads AASNRNYRVA…INQMCQTYSV (69 aa). Phosphoserine occurs at positions 359, 362, and 366. Thr-372 is modified (phosphothreonine).

It belongs to the G-protein coupled receptor 1 family. As to expression, in embryos, expression is seen at highest levels in the cuprophilic cells and at lower levels in the amnioserosa, developing CNS, cardiac mesoderm primordium and midline glia.

It localises to the cell membrane. Its function is as follows. Essential for the first active step of germ cell migration: transepithelial migration of germ cells through the posterior midgut (PMG) epithelium. The chain is Protein trapped in endoderm-1 (Tre1) from Drosophila melanogaster (Fruit fly).